Reading from the N-terminus, the 160-residue chain is Eukaryotic translation initiation factor 5A (160 aa).

The segment covering 1-10 has biased composition (basic and acidic residues); sequence MSDDDHHFES. Residues 1–23 are disordered; sequence MSDDDHHFESSADAGASKTYPQQ. Lys52 bears the Hypusine mark.

This sequence belongs to the eIF-5A family. Lys-52 undergoes hypusination, a unique post-translational modification that consists in the addition of a butylamino group from spermidine to lysine side chain, leading to the formation of the unusual amino acid hypusine. eIF-5As are the only known proteins to undergo this modification, which is essential for their function.

Its function is as follows. Translation factor that promotes translation elongation and termination, particularly upon ribosome stalling at specific amino acid sequence contexts. Binds between the exit (E) and peptidyl (P) site of the ribosome and promotes rescue of stalled ribosome: specifically required for efficient translation of polyproline-containing peptides as well as other motifs that stall the ribosome. Acts as a ribosome quality control (RQC) cofactor by joining the RQC complex to facilitate peptidyl transfer during CAT tailing step. The chain is Eukaryotic translation initiation factor 5A from Dianthus caryophyllus (Carnation).